The sequence spans 631 residues: Phosphomethylpyrimidine synthase (631 aa).

Substrate is bound by residues asparagine 231, methionine 260, tyrosine 289, histidine 325, 345–347 (SRG), 386–389 (DGLR), and glutamate 425. Position 429 (histidine 429) interacts with Zn(2+). A substrate-binding site is contributed by tyrosine 452. Histidine 493 is a binding site for Zn(2+). Cysteine 573, cysteine 576, and cysteine 581 together coordinate [4Fe-4S] cluster.

Belongs to the ThiC family. In terms of assembly, homodimer. [4Fe-4S] cluster serves as cofactor.

It carries out the reaction 5-amino-1-(5-phospho-beta-D-ribosyl)imidazole + S-adenosyl-L-methionine = 4-amino-2-methyl-5-(phosphooxymethyl)pyrimidine + CO + 5'-deoxyadenosine + formate + L-methionine + 3 H(+). Its pathway is cofactor biosynthesis; thiamine diphosphate biosynthesis. Functionally, catalyzes the synthesis of the hydroxymethylpyrimidine phosphate (HMP-P) moiety of thiamine from aminoimidazole ribotide (AIR) in a radical S-adenosyl-L-methionine (SAM)-dependent reaction. This is Phosphomethylpyrimidine synthase from Acinetobacter baylyi (strain ATCC 33305 / BD413 / ADP1).